The following is a 280-amino-acid chain: ATP synthase gamma chain (280 aa).

The protein belongs to the ATPase gamma chain family. As to quaternary structure, F-type ATPases have 2 components, CF(1) - the catalytic core - and CF(0) - the membrane proton channel. CF(1) has five subunits: alpha(3), beta(3), gamma(1), delta(1), epsilon(1). CF(0) has three main subunits: a, b and c.

It localises to the cell membrane. Functionally, produces ATP from ADP in the presence of a proton gradient across the membrane. The gamma chain is believed to be important in regulating ATPase activity and the flow of protons through the CF(0) complex. This is ATP synthase gamma chain from Mycoplasma mycoides subsp. mycoides SC (strain CCUG 32753 / NCTC 10114 / PG1).